The following is a 368-amino-acid chain: Serine/threonine-protein kinase CAK1 (368 aa).

The region spanning 1–368 is the Protein kinase domain; the sequence is MKLDSIDITH…QRILQELEKP (368 aa). The active-site Proton acceptor is the aspartate 156.

Belongs to the protein kinase superfamily. CMGC Ser/Thr protein kinase family. CDC2/CDKX subfamily.

It catalyses the reaction L-seryl-[protein] + ATP = O-phospho-L-seryl-[protein] + ADP + H(+). It carries out the reaction L-threonyl-[protein] + ATP = O-phospho-L-threonyl-[protein] + ADP + H(+). This is Serine/threonine-protein kinase CAK1 (CAK1) from Saccharomyces cerevisiae (strain ATCC 204508 / S288c) (Baker's yeast).